Consider the following 406-residue polypeptide: Argininosuccinate synthase (406 aa).

8 to 16 (AYSGGLDTT) is a binding site for ATP. L-citrulline contacts are provided by Tyr86 and Ser91. Residue Gly116 coordinates ATP. Positions 118, 122, and 123 each coordinate L-aspartate. Residue Asn122 participates in L-citrulline binding. Residues Arg126, Ser175, Ser184, Glu261, and Tyr273 each coordinate L-citrulline.

It belongs to the argininosuccinate synthase family. Type 1 subfamily. As to quaternary structure, homotetramer.

It localises to the cytoplasm. The catalysed reaction is L-citrulline + L-aspartate + ATP = 2-(N(omega)-L-arginino)succinate + AMP + diphosphate + H(+). It functions in the pathway amino-acid biosynthesis; L-arginine biosynthesis; L-arginine from L-ornithine and carbamoyl phosphate: step 2/3. The chain is Argininosuccinate synthase from Brachyspira hyodysenteriae (strain ATCC 49526 / WA1).